The chain runs to 235 residues: Maximins-S type A (235 aa).

Residues 1–18 form the signal peptide; the sequence is MNFNYFILVLFFITSGHA. 2 propeptides span residues 19 to 35 and 52 to 65; these read KSET…HIKR and SAEE…LVKR. Asn83 bears the Asparagine amide mark. Residues 87–100 constitute a propeptide that is removed on maturation; sequence SAEEQDLAEDLVTR. Position 118 is an asparagine amide (Asn118). A propeptide spanning residues 122–135 is cleaved from the precursor; it reads SAEEQDLAEDLVKR. Asn153 carries the asparagine amide modification. The propeptide occupies 157 to 170; that stretch reads SAEEQDLAEDLVTR. At Lys188 the chain carries Lysine amide. The propeptide occupies 192–205; the sequence is SAEDQDLAEDLVTR. A Lysine amide modification is found at Lys223. Positions 227–235 are excised as a propeptide; the sequence is SAEQEKDMK.

This sequence belongs to the maximin-S family. As to expression, expressed by the skin dorsal glands.

The protein resides in the secreted. Maximin-S1 has no antimicrobial activity. Has no hemolytic activity. Its function is as follows. Maximin-S2 has an activity against mycoplasma but has no activity against common Gram-positive and Gram-negative bacteria nor fungi. Has no hemolytic activity. Functionally, maximin-S3 has an activity against mycoplasma but has no activity against common Gram-positive and Gram-negative bacteria nor fungi. Has no hemolytic activity. In terms of biological role, maximin-S4 has an activity against mycoplasma but has no activity against common Gram-positive and Gram-negative bacteria nor fungi. Has no hemolytic activity. Maximin-S5 has an activity against mycoplasma but has no activity against common Gram-positive and Gram-negative bacteria nor fungi. Has no hemolytic activity. This Bombina maxima (Giant fire-bellied toad) protein is Maximins-S type A.